The sequence spans 295 residues: NAD kinase (295 aa).

The active-site Proton acceptor is the D72. NAD(+) contacts are provided by residues 72–73 (DG), 146–147 (ND), R157, K174, D176, 187–192 (TAYALS), and Q247.

The protein belongs to the NAD kinase family. A divalent metal cation serves as cofactor.

It localises to the cytoplasm. It catalyses the reaction NAD(+) + ATP = ADP + NADP(+) + H(+). Involved in the regulation of the intracellular balance of NAD and NADP, and is a key enzyme in the biosynthesis of NADP. Catalyzes specifically the phosphorylation on 2'-hydroxyl of the adenosine moiety of NAD to yield NADP. This is NAD kinase from Azotobacter vinelandii (strain DJ / ATCC BAA-1303).